We begin with the raw amino-acid sequence, 323 residues long: Aspartate carbamoyltransferase catalytic subunit (323 aa).

Residues R71 and T72 each contribute to the carbamoyl phosphate site. An L-aspartate-binding site is contributed by K99. 3 residues coordinate carbamoyl phosphate: R121, H151, and Q154. Residues R184 and R239 each coordinate L-aspartate. Residues G280 and P281 each contribute to the carbamoyl phosphate site.

It belongs to the aspartate/ornithine carbamoyltransferase superfamily. ATCase family. In terms of assembly, heterododecamer (2C3:3R2) of six catalytic PyrB chains organized as two trimers (C3), and six regulatory PyrI chains organized as three dimers (R2).

The catalysed reaction is carbamoyl phosphate + L-aspartate = N-carbamoyl-L-aspartate + phosphate + H(+). Its pathway is pyrimidine metabolism; UMP biosynthesis via de novo pathway; (S)-dihydroorotate from bicarbonate: step 2/3. In terms of biological role, catalyzes the condensation of carbamoyl phosphate and aspartate to form carbamoyl aspartate and inorganic phosphate, the committed step in the de novo pyrimidine nucleotide biosynthesis pathway. The polypeptide is Aspartate carbamoyltransferase catalytic subunit (Ralstonia nicotianae (strain ATCC BAA-1114 / GMI1000) (Ralstonia solanacearum)).